Here is a 120-residue protein sequence, read N- to C-terminus: Large ribosomal subunit protein bL17 (120 aa).

The protein belongs to the bacterial ribosomal protein bL17 family. In terms of assembly, part of the 50S ribosomal subunit. Contacts protein L32.

The chain is Large ribosomal subunit protein bL17 from Bacillus subtilis (strain 168).